Reading from the N-terminus, the 535-residue chain is Phosphoenolpyruvate carboxykinase (ATP) (535 aa).

Arg59, Tyr201, and Lys207 together coordinate substrate. Residues Lys207, His226, and 243-251 contribute to the ATP site; that span reads GLSGTGKTT. Residues Lys207 and His226 each contribute to the Mn(2+) site. Asp264 is a binding site for Mn(2+). ATP is bound by residues Glu292, Arg328, 444 to 445, and Thr450; that span reads RI. Arg328 provides a ligand contact to substrate.

Belongs to the phosphoenolpyruvate carboxykinase (ATP) family. Mn(2+) serves as cofactor.

The protein localises to the cytoplasm. The enzyme catalyses oxaloacetate + ATP = phosphoenolpyruvate + ADP + CO2. Its pathway is carbohydrate biosynthesis; gluconeogenesis. In terms of biological role, involved in the gluconeogenesis. Catalyzes the conversion of oxaloacetate (OAA) to phosphoenolpyruvate (PEP) through direct phosphoryl transfer between the nucleoside triphosphate and OAA. This Bacteroides fragilis (strain ATCC 25285 / DSM 2151 / CCUG 4856 / JCM 11019 / LMG 10263 / NCTC 9343 / Onslow / VPI 2553 / EN-2) protein is Phosphoenolpyruvate carboxykinase (ATP).